The chain runs to 643 residues: Threonine--tRNA ligase (643 aa).

The 61-residue stretch at Met-1–Thr-61 folds into the TGS domain. The tract at residues Asp-243–Pro-534 is catalytic. Residues Cys-334, His-385, and His-511 each coordinate Zn(2+).

It belongs to the class-II aminoacyl-tRNA synthetase family. Homodimer. Requires Zn(2+) as cofactor.

It localises to the cytoplasm. It carries out the reaction tRNA(Thr) + L-threonine + ATP = L-threonyl-tRNA(Thr) + AMP + diphosphate + H(+). Its function is as follows. Catalyzes the attachment of threonine to tRNA(Thr) in a two-step reaction: L-threonine is first activated by ATP to form Thr-AMP and then transferred to the acceptor end of tRNA(Thr). Also edits incorrectly charged L-seryl-tRNA(Thr). The chain is Threonine--tRNA ligase from Actinobacillus pleuropneumoniae serotype 7 (strain AP76).